The following is a 724-amino-acid chain: Catalase-peroxidase (724 aa).

Residues 98 to 226 (WHSAGTYRIA…LATVMMGLIY (129 aa)) constitute a cross-link (tryptophyl-tyrosyl-methioninium (Trp-Tyr) (with M-252)). The active-site Proton acceptor is the histidine 99. A cross-link (tryptophyl-tyrosyl-methioninium (Tyr-Met) (with W-98)) is located at residues 226-252 (YVNPEGVDGNPDPLKTAQDMRVTFARM). Histidine 267 lines the heme b pocket.

Belongs to the peroxidase family. Peroxidase/catalase subfamily. In terms of assembly, homodimer or homotetramer. It depends on heme b as a cofactor. Post-translationally, formation of the three residue Trp-Tyr-Met cross-link is important for the catalase, but not the peroxidase activity of the enzyme.

The enzyme catalyses H2O2 + AH2 = A + 2 H2O. It catalyses the reaction 2 H2O2 = O2 + 2 H2O. Bifunctional enzyme with both catalase and broad-spectrum peroxidase activity. This chain is Catalase-peroxidase, found in Vibrio cholerae serotype O1 (strain ATCC 39541 / Classical Ogawa 395 / O395).